The primary structure comprises 323 residues: MIEFGDFYQRIAKGNLSHWLDTLPAQLSAWQRESLHGKFKQWFNSVEHLPALTPTRLDLLNGVRAEMDTPLSPGQLEGIEKMLRTMMPWRKGPFSLYGIDIDTEWHSDWKWDRVLPHISPLAGRTILDVGCGSGYHLWRMLGAGAQLAVGIDPMQLFLCQFEAVRKLLGGDQRAHLLPLGIEQLPELAAFDTVFSMGVLYHRRSPLDHLYQLKNQLVSEGELVLETLVIEGDRNQVLVPGDRYAQMRNVYFIPSAEALKCWLEKCGFVDVKIADMCVTSTEEQRRTDWMTSESLAEFLDPNDPGKTIEGYPSPLRAVLVARKP.

Residues Lys91, Trp105, Lys110, Gly130, 181–182 (IE), Met196, Tyr200, and Arg315 each bind carboxy-S-adenosyl-L-methionine.

It belongs to the class I-like SAM-binding methyltransferase superfamily. CmoB family. In terms of assembly, homotetramer.

The enzyme catalyses carboxy-S-adenosyl-L-methionine + 5-hydroxyuridine(34) in tRNA = 5-carboxymethoxyuridine(34) in tRNA + S-adenosyl-L-homocysteine + H(+). Catalyzes carboxymethyl transfer from carboxy-S-adenosyl-L-methionine (Cx-SAM) to 5-hydroxyuridine (ho5U) to form 5-carboxymethoxyuridine (cmo5U) at position 34 in tRNAs. The sequence is that of tRNA U34 carboxymethyltransferase from Serratia proteamaculans (strain 568).